Reading from the N-terminus, the 107-residue chain is Serine-rich and transmembrane domain-containing protein 1 (107 aa).

A helical membrane pass occupies residues 43–63 (IYVSIFLSLLAFLLLLLIIAL).

It localises to the membrane. This is Serine-rich and transmembrane domain-containing protein 1 (Sertm1) from Mus musculus (Mouse).